The following is a 267-amino-acid chain: Indole-3-glycerol phosphate synthase (267 aa).

Belongs to the TrpC family.

It catalyses the reaction 1-(2-carboxyphenylamino)-1-deoxy-D-ribulose 5-phosphate + H(+) = (1S,2R)-1-C-(indol-3-yl)glycerol 3-phosphate + CO2 + H2O. It participates in amino-acid biosynthesis; L-tryptophan biosynthesis; L-tryptophan from chorismate: step 4/5. The chain is Indole-3-glycerol phosphate synthase from Cupriavidus pinatubonensis (strain JMP 134 / LMG 1197) (Cupriavidus necator (strain JMP 134)).